The primary structure comprises 53 residues: uncharacterized protein (53 aa).

2 consecutive transmembrane segments (helical) span residues 3–22 (LFGM…GVLL) and 26–45 (AFFF…FTVL).

Its subcellular location is the cell membrane. This is an uncharacterized protein from Bacillus subtilis (strain 168).